The primary structure comprises 106 residues: Putative double-stranded DNA mimic protein VIBHAR_02752 (106 aa).

This sequence belongs to the putative dsDNA mimic protein family.

Its function is as follows. May act as a double-stranded DNA (dsDNA) mimic. Probably regulates the activity of a dsDNA-binding protein. The protein is Putative double-stranded DNA mimic protein VIBHAR_02752 of Vibrio campbellii (strain ATCC BAA-1116).